Here is a 66-residue protein sequence, read N- to C-terminus: Photosystem II reaction center protein J (66 aa).

Residues 1–25 (MSGKKSPYPDGRIPDRNPDGTPAVP) form a disordered region. The chain crosses the membrane as a helical span at residues 37–57 (LWLVATAGGMAVLFVVGLFFY).

The protein belongs to the PsbJ family. As to quaternary structure, PSII is composed of 1 copy each of membrane proteins PsbA, PsbB, PsbC, PsbD, PsbE, PsbF, PsbH, PsbI, PsbJ, PsbK, PsbL, PsbM, PsbT, PsbX, PsbY, PsbZ, Psb30/Ycf12, peripheral proteins PsbO, CyanoQ (PsbQ), PsbU, PsbV and a large number of cofactors. It forms dimeric complexes.

The protein localises to the cellular thylakoid membrane. One of the components of the core complex of photosystem II (PSII). PSII is a light-driven water:plastoquinone oxidoreductase that uses light energy to abstract electrons from H(2)O, generating O(2) and a proton gradient subsequently used for ATP formation. It consists of a core antenna complex that captures photons, and an electron transfer chain that converts photonic excitation into a charge separation. The protein is Photosystem II reaction center protein J of Synechococcus sp. (strain CC9605).